The primary structure comprises 211 residues: Thiamine-phosphate synthase (211 aa).

4-amino-2-methyl-5-(diphosphooxymethyl)pyrimidine is bound by residues 36–40 (QLREK) and asparagine 68. Mg(2+)-binding residues include aspartate 69 and aspartate 88. Serine 107 contributes to the 4-amino-2-methyl-5-(diphosphooxymethyl)pyrimidine binding site. 133–135 (TGS) is a 2-[(2R,5Z)-2-carboxy-4-methylthiazol-5(2H)-ylidene]ethyl phosphate binding site. Position 136 (lysine 136) interacts with 4-amino-2-methyl-5-(diphosphooxymethyl)pyrimidine. 2-[(2R,5Z)-2-carboxy-4-methylthiazol-5(2H)-ylidene]ethyl phosphate is bound by residues glycine 167 and 187-188 (IT).

Belongs to the thiamine-phosphate synthase family. The cofactor is Mg(2+).

The enzyme catalyses 2-[(2R,5Z)-2-carboxy-4-methylthiazol-5(2H)-ylidene]ethyl phosphate + 4-amino-2-methyl-5-(diphosphooxymethyl)pyrimidine + 2 H(+) = thiamine phosphate + CO2 + diphosphate. It carries out the reaction 2-(2-carboxy-4-methylthiazol-5-yl)ethyl phosphate + 4-amino-2-methyl-5-(diphosphooxymethyl)pyrimidine + 2 H(+) = thiamine phosphate + CO2 + diphosphate. It catalyses the reaction 4-methyl-5-(2-phosphooxyethyl)-thiazole + 4-amino-2-methyl-5-(diphosphooxymethyl)pyrimidine + H(+) = thiamine phosphate + diphosphate. Its pathway is cofactor biosynthesis; thiamine diphosphate biosynthesis; thiamine phosphate from 4-amino-2-methyl-5-diphosphomethylpyrimidine and 4-methyl-5-(2-phosphoethyl)-thiazole: step 1/1. Its function is as follows. Condenses 4-methyl-5-(beta-hydroxyethyl)thiazole monophosphate (THZ-P) and 2-methyl-4-amino-5-hydroxymethyl pyrimidine pyrophosphate (HMP-PP) to form thiamine monophosphate (TMP). This chain is Thiamine-phosphate synthase, found in Haloarcula marismortui (strain ATCC 43049 / DSM 3752 / JCM 8966 / VKM B-1809) (Halobacterium marismortui).